Reading from the N-terminus, the 1322-residue chain is Ice nucleation protein InaA (1322 aa).

An octapeptide periodicity region spans residues 162–1281 (ATYGSTLSGT…LTAGENSVLI (1120 aa)). Polar residues-rich tracts occupy residues 271–302 (SLTAGYGSTQTAGEDSSLTAGYGSTQTAQKGS), 327–350 (TQTAGEESTQTAGYGSTQTAQKGS), 373–398 (GSTQTAGEDSSLTAGYGSTQTAQKGS), and 423–446 (TQTAGEESTQTAGYGSTQTAQKGS). 4 disordered regions span residues 271 to 303 (SLTAGYGSTQTAGEDSSLTAGYGSTQTAQKGSD), 327 to 358 (TQTAGEESTQTAGYGSTQTAQKGSDLTAGYGS), 372 to 399 (YGSTQTAGEDSSLTAGYGSTQTAQKGSD), and 423 to 448 (TQTAGEESTQTAGYGSTQTAQKGSDL).

Belongs to the bacterial ice nucleation protein family.

The protein resides in the cell outer membrane. Ice nucleation proteins enable bacteria to nucleate crystallization in supercooled water. The sequence is that of Ice nucleation protein InaA (inaA) from Pantoea ananas (Erwinia uredovora).